The chain runs to 315 residues: Glutathione synthetase (315 aa).

Residues 125–310 (KLFTAWFSEF…ITGMLFDAIE (186 aa)) form the ATP-grasp domain. 151–207 (HQAKGDIILKPLDGMGGTSIFRVKQDDPNLGVIIETLTQYGNQYAMAQAFIPEITKG) provides a ligand contact to ATP. Residues glutamate 281 and asparagine 283 each contribute to the Mg(2+) site.

Belongs to the prokaryotic GSH synthase family. The cofactor is Mg(2+). It depends on Mn(2+) as a cofactor.

It carries out the reaction gamma-L-glutamyl-L-cysteine + glycine + ATP = glutathione + ADP + phosphate + H(+). Its pathway is sulfur metabolism; glutathione biosynthesis; glutathione from L-cysteine and L-glutamate: step 2/2. This chain is Glutathione synthetase, found in Shewanella oneidensis (strain ATCC 700550 / JCM 31522 / CIP 106686 / LMG 19005 / NCIMB 14063 / MR-1).